The following is a 399-amino-acid chain: MGSMAQKSVLMLCGEFMEAYETIVPLYVLQAFGVSVHCVSPGRKTGDKCVMAAHDLLGLEIYTELVVDHLTLNANFDGVIPDQYDAIIIPGGRFTELLSADEKCVSLVARFAELKKLIFTSCHSQLFLAAAGLLTGGMKCTAFESMKPFIELSGGAWWQQPGVQTLFEITDCVKDGSFMSTMGWPTLGHSLKVLLESLGSKISSSKENHQTSLLFLIGDCVEDYSINVPFKAFQALGCKVDAVTPTKKRGEKCATIVHDLEDGRQLPTEKFGHNFYVTVAWDDVSVDDYDCIVVPGGRSPELLVMNPKAVELVRKFVEKGKFVAAIGMGNWLLAATGALKKKRCASSYGTKVAVKVAGGEIVESERCVTDDKLVTAASTSDLPAFLYALSTALGLSVVF.

2 PfpI endopeptidase domains span residues 7–199 and 211–394; these read KSVL…ESLG and TSLL…TALG.

This sequence belongs to the peptidase C56 family. Homotrimer.

May be involved in oxidative stress response. This is DJ-1 protein homolog F (DJ1F) from Arabidopsis thaliana (Mouse-ear cress).